We begin with the raw amino-acid sequence, 503 residues long: Probable cytosol aminopeptidase (503 aa).

Residues Lys-270 and Asp-275 each contribute to the Mn(2+) site. Lys-282 is an active-site residue. Residues Asp-293, Asp-352, and Glu-354 each coordinate Mn(2+). Residue Arg-356 is part of the active site.

It belongs to the peptidase M17 family. The cofactor is Mn(2+).

The protein resides in the cytoplasm. The catalysed reaction is Release of an N-terminal amino acid, Xaa-|-Yaa-, in which Xaa is preferably Leu, but may be other amino acids including Pro although not Arg or Lys, and Yaa may be Pro. Amino acid amides and methyl esters are also readily hydrolyzed, but rates on arylamides are exceedingly low.. It catalyses the reaction Release of an N-terminal amino acid, preferentially leucine, but not glutamic or aspartic acids.. In terms of biological role, presumably involved in the processing and regular turnover of intracellular proteins. Catalyzes the removal of unsubstituted N-terminal amino acids from various peptides. The polypeptide is Probable cytosol aminopeptidase (Escherichia fergusonii (strain ATCC 35469 / DSM 13698 / CCUG 18766 / IAM 14443 / JCM 21226 / LMG 7866 / NBRC 102419 / NCTC 12128 / CDC 0568-73)).